Consider the following 313-residue polypeptide: ADP-L-glycero-D-manno-heptose-6-epimerase (313 aa).

NADP(+)-binding positions include 10–11 (MI), 31–32 (DN), lysine 38, arginine 53, 75–79 (EGACS), and asparagine 92. The active-site Proton acceptor is the tyrosine 139. Lysine 143 serves as a coordination point for NADP(+). Asparagine 174 serves as a coordination point for substrate. NADP(+) contacts are provided by valine 175 and lysine 183. Lysine 183 functions as the Proton acceptor in the catalytic mechanism. Residues serine 185, histidine 192, 206 to 209 (FAGS), arginine 214, and tyrosine 277 contribute to the substrate site.

Belongs to the NAD(P)-dependent epimerase/dehydratase family. HldD subfamily. Homopentamer. The cofactor is NADP(+).

It catalyses the reaction ADP-D-glycero-beta-D-manno-heptose = ADP-L-glycero-beta-D-manno-heptose. Its pathway is nucleotide-sugar biosynthesis; ADP-L-glycero-beta-D-manno-heptose biosynthesis; ADP-L-glycero-beta-D-manno-heptose from D-glycero-beta-D-manno-heptose 7-phosphate: step 4/4. It functions in the pathway bacterial outer membrane biogenesis; LPS core biosynthesis. Its function is as follows. Catalyzes the interconversion between ADP-D-glycero-beta-D-manno-heptose and ADP-L-glycero-beta-D-manno-heptose via an epimerization at carbon 6 of the heptose. The sequence is that of ADP-L-glycero-D-manno-heptose-6-epimerase from Vibrio vulnificus (strain CMCP6).